We begin with the raw amino-acid sequence, 408 residues long: NADH-quinone oxidoreductase subunit D (408 aa).

It belongs to the complex I 49 kDa subunit family. As to quaternary structure, NDH-1 is composed of 14 different subunits. Subunits NuoB, C, D, E, F, and G constitute the peripheral sector of the complex.

The protein localises to the cell inner membrane. It catalyses the reaction a quinone + NADH + 5 H(+)(in) = a quinol + NAD(+) + 4 H(+)(out). Its function is as follows. NDH-1 shuttles electrons from NADH, via FMN and iron-sulfur (Fe-S) centers, to quinones in the respiratory chain. The immediate electron acceptor for the enzyme in this species is believed to be ubiquinone. Couples the redox reaction to proton translocation (for every two electrons transferred, four hydrogen ions are translocated across the cytoplasmic membrane), and thus conserves the redox energy in a proton gradient. The protein is NADH-quinone oxidoreductase subunit D of Campylobacter hominis (strain ATCC BAA-381 / DSM 21671 / CCUG 45161 / LMG 19568 / NCTC 13146 / CH001A).